A 579-amino-acid chain; its full sequence is Alpha-longipinene synthase (579 aa).

4 residues coordinate Mg(2+): Asp-332, Asp-336, Asp-476, and Asn-484. The short motif at Asp-332 to Asp-336 is the DDXXD motif element.

Belongs to the terpene synthase family. Tpsd subfamily. It depends on Mg(2+) as a cofactor. The cofactor is Mn(2+).

It carries out the reaction (2E,6E)-farnesyl diphosphate = alpha-longipinene + diphosphate. The protein operates within sesquiterpene biosynthesis. It functions in the pathway terpene metabolism; oleoresin biosynthesis. Its function is as follows. Terpene synthase (TPS) involved in the biosynthesis of sesquiterpene natural products included in conifer oleoresin secretions and volatile emissions; these compounds contribute to biotic and abiotic stress defense against herbivores and pathogens. Catalyzes the conversion of (2E,6E)-farnesyl diphosphate (FPP) to alpha-longipinene. This chain is Alpha-longipinene synthase, found in Picea sitchensis (Sitka spruce).